The following is a 338-amino-acid chain: RNA 3'-terminal phosphate cyclase (338 aa).

ATP contacts are provided by residues Q103 and 283 to 287; that span reads YLADQ. The active-site Tele-AMP-histidine intermediate is H308.

The protein belongs to the RNA 3'-terminal cyclase family. Type 1 subfamily.

The protein localises to the cytoplasm. The catalysed reaction is a 3'-end 3'-phospho-ribonucleotide-RNA + ATP = a 3'-end 2',3'-cyclophospho-ribonucleotide-RNA + AMP + diphosphate. Catalyzes the conversion of 3'-phosphate to a 2',3'-cyclic phosphodiester at the end of RNA. The mechanism of action of the enzyme occurs in 3 steps: (A) adenylation of the enzyme by ATP; (B) transfer of adenylate to an RNA-N3'P to produce RNA-N3'PP5'A; (C) and attack of the adjacent 2'-hydroxyl on the 3'-phosphorus in the diester linkage to produce the cyclic end product. The biological role of this enzyme is unknown but it is likely to function in some aspects of cellular RNA processing. In Shigella boydii serotype 18 (strain CDC 3083-94 / BS512), this protein is RNA 3'-terminal phosphate cyclase.